Reading from the N-terminus, the 474-residue chain is C6 finger domain transcription factor aclZ (474 aa).

Residues 42-69 (CNQCHAAKVRCSGERTGCDRCNNLQYQC) constitute a DNA-binding region (zn(2)-C6 fungal-type). Disordered stretches follow at residues 85-148 (RGNK…SHSA) and 177-206 (MSSD…DSHT). Polar residues predominate over residues 90–105 (VRTTTEALQRPATAST). The segment covering 117–138 (TDQRSENDPLSRSDFGEQDAAH) has biased composition (basic and acidic residues).

It localises to the nucleus. In terms of biological role, transcription factor that specifically regulates the gene cluster that mediates the biosynthesis of aspirochlorine (or antibiotic A30641), an unusual halogenated spiro compound with distinctive antifungal properties due to selective inhibition of protein biosynthesis, and which is also active against bacteria, viruses, and murine tumor cells. The chain is C6 finger domain transcription factor aclZ from Aspergillus oryzae (strain ATCC 42149 / RIB 40) (Yellow koji mold).